The chain runs to 253 residues: Carboxy-S-adenosyl-L-methionine synthase (253 aa).

S-adenosyl-L-methionine is bound by residues Tyr-49, 74–76 (GCS), 98–99 (DN), and Asn-141.

The protein belongs to the class I-like SAM-binding methyltransferase superfamily. Cx-SAM synthase family.

It carries out the reaction prephenate + S-adenosyl-L-methionine = carboxy-S-adenosyl-L-methionine + 3-phenylpyruvate + H2O. Its function is as follows. Catalyzes the conversion of S-adenosyl-L-methionine (SAM) to carboxy-S-adenosyl-L-methionine (Cx-SAM). This is Carboxy-S-adenosyl-L-methionine synthase from Trichodesmium erythraeum (strain IMS101).